Consider the following 334-residue polypeptide: Ferredoxin--NADP reductase (334 aa).

7 residues coordinate FAD: Asp-32, Gln-40, Tyr-45, Val-85, Phe-120, Asp-287, and Thr-327.

The protein belongs to the ferredoxin--NADP reductase type 2 family. As to quaternary structure, homodimer. Requires FAD as cofactor.

It carries out the reaction 2 reduced [2Fe-2S]-[ferredoxin] + NADP(+) + H(+) = 2 oxidized [2Fe-2S]-[ferredoxin] + NADPH. The polypeptide is Ferredoxin--NADP reductase (Wolbachia pipientis subsp. Culex pipiens (strain wPip)).